Consider the following 605-residue polypeptide: Pyruvate decarboxylase 2 (605 aa).

Positions 68 and 155 each coordinate substrate. Positions 433 to 515 (DSWFNCQKLK…FLINNGGYTI (83 aa)) are thiamine pyrophosphate binding. Mg(2+) contacts are provided by D483, N510, and G512. E516 is a binding site for substrate.

The protein belongs to the TPP enzyme family. As to quaternary structure, homotetramer. The cofactor is a metal cation. It depends on thiamine diphosphate as a cofactor.

The enzyme catalyses a 2-oxocarboxylate + H(+) = an aldehyde + CO2. The chain is Pyruvate decarboxylase 2 (PDC2) from Oryza sativa subsp. japonica (Rice).